Reading from the N-terminus, the 315-residue chain is Cytochrome bo(3) ubiquinol oxidase subunit 2 (315 aa).

An N-terminal signal peptide occupies residues 1–24 (MRLRKYNKSLGWLSLFAGTVLLSG). Residue C25 is the site of N-palmitoyl cysteine attachment. Residue C25 is the site of S-diacylglycerol cysteine attachment. Residues 25–50 (CNSALLDPKGQIGLEQRSLILTAFGL) are Periplasmic-facing. A helical transmembrane segment spans residues 51–68 (MLIVVIPAILMAVGFAWK). The Cytoplasmic portion of the chain corresponds to 69-92 (YRASNKDAKYSPNWSHSNKVEAVV). The chain crosses the membrane as a helical span at residues 93–111 (WTVPILIIIFLAVLTWKTT). At 112 to 315 (HALEPSKPLA…MDMSHAESAH (204 aa)) the chain is on the periplasmic side. Residues 288 to 315 (MDMTQPEGEHSAHEGMEGMDMSHAESAH) are disordered. Residues 294 to 315 (EGEHSAHEGMEGMDMSHAESAH) are compositionally biased toward basic and acidic residues.

This sequence belongs to the cytochrome c oxidase subunit 2 family. In terms of assembly, heterooctamer of two A chains, two B chains, two C chains and two D chains.

The protein resides in the cell inner membrane. In terms of biological role, cytochrome bo(3) ubiquinol terminal oxidase is the component of the aerobic respiratory chain of E.coli that predominates when cells are grown at high aeration. Has proton pump activity across the membrane in addition to electron transfer, pumping 2 protons/electron. The sequence is that of Cytochrome bo(3) ubiquinol oxidase subunit 2 (cyoA) from Escherichia coli O6:H1 (strain CFT073 / ATCC 700928 / UPEC).